The sequence spans 147 residues: D-aminoacyl-tRNA deacylase (147 aa).

Residues 139–140 (GP) carry the Gly-cisPro motif, important for rejection of L-amino acids motif.

This sequence belongs to the DTD family. Homodimer.

The protein localises to the cytoplasm. It carries out the reaction glycyl-tRNA(Ala) + H2O = tRNA(Ala) + glycine + H(+). It catalyses the reaction a D-aminoacyl-tRNA + H2O = a tRNA + a D-alpha-amino acid + H(+). An aminoacyl-tRNA editing enzyme that deacylates mischarged D-aminoacyl-tRNAs. Also deacylates mischarged glycyl-tRNA(Ala), protecting cells against glycine mischarging by AlaRS. Acts via tRNA-based rather than protein-based catalysis; rejects L-amino acids rather than detecting D-amino acids in the active site. By recycling D-aminoacyl-tRNA to D-amino acids and free tRNA molecules, this enzyme counteracts the toxicity associated with the formation of D-aminoacyl-tRNA entities in vivo and helps enforce protein L-homochirality. This Rippkaea orientalis (strain PCC 8801 / RF-1) (Cyanothece sp. (strain PCC 8801)) protein is D-aminoacyl-tRNA deacylase.